The following is a 251-amino-acid chain: Phosphate import ATP-binding protein PstB (251 aa).

Residues phenylalanine 5–leucine 246 enclose the ABC transporter domain. Position 37–44 (glycine 37–serine 44) interacts with ATP.

Belongs to the ABC transporter superfamily. Phosphate importer (TC 3.A.1.7) family. As to quaternary structure, the complex is composed of two ATP-binding proteins (PstB), two transmembrane proteins (PstC and PstA) and a solute-binding protein (PstS).

It is found in the cell membrane. The enzyme catalyses phosphate(out) + ATP + H2O = ADP + 2 phosphate(in) + H(+). Functionally, part of the ABC transporter complex PstSACB involved in phosphate import. Responsible for energy coupling to the transport system. The chain is Phosphate import ATP-binding protein PstB from Archaeoglobus fulgidus (strain ATCC 49558 / DSM 4304 / JCM 9628 / NBRC 100126 / VC-16).